We begin with the raw amino-acid sequence, 372 residues long: Glutamate 5-kinase (372 aa).

Residue Lys-14 participates in ATP binding. Substrate is bound by residues Ser-54, Asp-141, and Asn-153. Residues 173-174 (TD) and 215-221 (SGGMLTK) each bind ATP. Residues 280 to 358 (AGKVVVDEGA…HEIEHILGYI (79 aa)) enclose the PUA domain.

It belongs to the glutamate 5-kinase family.

The protein localises to the cytoplasm. The catalysed reaction is L-glutamate + ATP = L-glutamyl 5-phosphate + ADP. It functions in the pathway amino-acid biosynthesis; L-proline biosynthesis; L-glutamate 5-semialdehyde from L-glutamate: step 1/2. Catalyzes the transfer of a phosphate group to glutamate to form L-glutamate 5-phosphate. The polypeptide is Glutamate 5-kinase (Methylobacillus flagellatus (strain ATCC 51484 / DSM 6875 / VKM B-1610 / KT)).